Here is an 85-residue protein sequence, read N- to C-terminus: Small ribosomal subunit protein uS17 (85 aa).

The protein belongs to the universal ribosomal protein uS17 family. As to quaternary structure, part of the 30S ribosomal subunit.

Its function is as follows. One of the primary rRNA binding proteins, it binds specifically to the 5'-end of 16S ribosomal RNA. The sequence is that of Small ribosomal subunit protein uS17 from Mesoplasma florum (strain ATCC 33453 / NBRC 100688 / NCTC 11704 / L1) (Acholeplasma florum).